The chain runs to 208 residues: FMN-dependent NADH:quinone oxidoreductase (208 aa).

Residues 17–19 (SNS), 99–102 (MWNL), and 143–146 (SRGG) each bind FMN.

Belongs to the azoreductase type 1 family. In terms of assembly, homodimer. FMN is required as a cofactor.

The enzyme catalyses 2 a quinone + NADH + H(+) = 2 a 1,4-benzosemiquinone + NAD(+). It carries out the reaction N,N-dimethyl-1,4-phenylenediamine + anthranilate + 2 NAD(+) = 2-(4-dimethylaminophenyl)diazenylbenzoate + 2 NADH + 2 H(+). Functionally, quinone reductase that provides resistance to thiol-specific stress caused by electrophilic quinones. Also exhibits azoreductase activity. Catalyzes the reductive cleavage of the azo bond in aromatic azo compounds to the corresponding amines. The chain is FMN-dependent NADH:quinone oxidoreductase from Staphylococcus aureus (strain MSSA476).